A 117-amino-acid polypeptide reads, in one-letter code: Large ribosomal subunit protein bL17 (117 aa).

Belongs to the bacterial ribosomal protein bL17 family. As to quaternary structure, part of the 50S ribosomal subunit. Contacts protein L32.

In Campylobacter jejuni subsp. jejuni serotype O:6 (strain 81116 / NCTC 11828), this protein is Large ribosomal subunit protein bL17.